Reading from the N-terminus, the 422-residue chain is MALRGSHRLEVIFKRCIASPVLHSQAGNRRSSQLAIKGVDPNSNGNSGQYQQNGEHKEKGWRRLVRFFVPFSLGAAVSAAIIQREDLTPTIAASKMTGRRRDFNFIADVVAGCADSVVYIEIKDTRHFDYFSGQPITASNGSGFIIEQNGLILTNAHVVINKPHTMVQVRLSDGRTFPATIEDVDQTSDLATLRIQVNNLSVMRLGKSSTLRSGEWVVALGSPLALSNTVTAGVISSTQRASQELGLRNRDINYLQTDAAITFGNSGGPLVNLDGEAIGVNSMKVTAGISFAIPIDYVKVFLERAAEKRKKGSAYKTGYPVKRYMGITMLTLTPDILFELKSRSQNMPSNLTHGVLVWKVIVGSPAHSGGLQPGDIVTHINKKEIKNSSDVYDALADNSKTLDIVILRGVKQMHVTITPEDP.

A mitochondrion-targeting transit peptide spans 1–17 (MALRGSHRLEVIFKRCI). Residues 18 to 74 (ASPVLHSQAGNRRSSQLAIKGVDPNSNGNSGQYQQNGEHKEKGWRRLVRFFVPFSLG) constitute a propeptide that is removed on maturation. The segment at 28–55 (NRRSSQLAIKGVDPNSNGNSGQYQQNGE) is disordered. Residues 42-53 (NSNGNSGQYQQN) are compositionally biased toward low complexity. Residues 64 to 82 (LVRFFVPFSLGAAVSAAII) form a helical membrane-spanning segment. Short sequence motifs (IAP-binding) lie at residues 75–78 (AAVS) and 94–97 (SKMT). The segment at 139-302 (SNGSGFIIEQ…IPIDYVKVFL (164 aa)) is serine protease. Active-site charge relay system residues include histidine 157, aspartate 189, and serine 266. Residues 325–410 (MGITMLTLTP…TLDIVILRGV (86 aa)) form the PDZ domain.

The protein belongs to the peptidase S1C family. In terms of assembly, interacts with th/DIAP1 (via BIR 2 domain).

Its subcellular location is the mitochondrion intermembrane space. The protein resides in the mitochondrion membrane. The enzyme catalyses Cleavage of non-polar aliphatic amino-acids at the P1 position, with a preference for Val, Ile and Met. At the P2 and P3 positions, Arg is selected most strongly with a secondary preference for other hydrophilic residues.. In terms of biological role, serine protease that shows proteolytic activity against a non-specific substrate beta-casein. Promotes or induces cell death either by direct binding to and inhibition of BIRC proteins (also called inhibitor of apoptosis proteins, IAPs), leading to an increase in caspase activity, or by a BIRC inhibition-independent, caspase-independent and serine protease activity-dependent mechanism. Can antagonize antiapoptotic activity of th/Diap1 by directly inducing the degradation of th/Diap1. The sequence is that of Serine protease HTRA2, mitochondrial from Drosophila sechellia (Fruit fly).